Consider the following 825-residue polypeptide: E3 ubiquitin-protein ligase ICP0 (825 aa).

Residues Met-1–Arg-10 show a composition bias toward polar residues. The interval Met-1–Gly-121 is disordered. Residues Asp-46 to Asp-57 are compositionally biased toward acidic residues. An RING-type zinc finger spans residues Cys-126–Asn-167. 3 disordered regions span residues Arg-221–Pro-312, Pro-325–Gly-683, and Arg-803–Glu-825. Residues Thr-242 to Asp-251 are compositionally biased toward acidic residues. 3 stretches are compositionally biased toward low complexity: residues Thr-273–Arg-283, Pro-290–Gly-303, and Pro-350–Asp-367. A compositionally biased stretch (pro residues) spans Ser-368 to Pro-379. Low complexity-rich tracts occupy residues Gly-380–Ser-394 and Pro-402–Gly-439. Residues Arg-456–Ser-468 show a composition bias toward polar residues. Positions Gly-479–Val-491 are enriched in gly residues. 2 stretches are compositionally biased toward low complexity: residues Pro-492–Ala-510 and Asp-519–Pro-540. The segment covering Arg-552–His-563 has biased composition (basic and acidic residues). The span at Ala-567–Ala-641 shows a compositional bias: low complexity. The segment covering Gly-658–Arg-667 has biased composition (basic residues). Low complexity predominate over residues Gly-811–Glu-825.

In terms of processing, auto-ubiquitinated.

It carries out the reaction S-ubiquitinyl-[E2 ubiquitin-conjugating enzyme]-L-cysteine + [acceptor protein]-L-lysine = [E2 ubiquitin-conjugating enzyme]-L-cysteine + N(6)-ubiquitinyl-[acceptor protein]-L-lysine.. In terms of biological role, evades nuclear antiviral defenses triggered by dsDNA viruses. Acts during the initial stages of lytic infection and the reactivation of latent viral genome. Prevents the antiviral effect of nuclear bodies by degrading host PML and SP100. Prevents antiviral response to viral DNA induced by IFI16 by degrading it. Additionally, inhibits host IRF3 nuclear signaling to prevent interferon production by the infected cells. The protein is E3 ubiquitin-protein ligase ICP0 (RL2) of Homo sapiens (Human).